Reading from the N-terminus, the 454-residue chain is O-phospho-L-seryl-tRNA:Cys-tRNA synthase 2 (454 aa).

Pyridoxal 5'-phosphate-binding positions include 146-147, N251, and 274-276; these read AR and SGH. K277 carries the N6-(pyridoxal phosphate)lysine modification.

This sequence belongs to the SepCysS family. Homodimer. Interacts with SepRS. Requires pyridoxal 5'-phosphate as cofactor.

It carries out the reaction O-phospho-L-seryl-tRNA(Cys) + hydrogen sulfide + H(+) = L-cysteinyl-tRNA(Cys) + phosphate. Functionally, converts O-phospho-L-seryl-tRNA(Cys) (Sep-tRNA(Cys)) to L-cysteinyl-tRNA(Cys) (Cys-tRNA(Cys)). The polypeptide is O-phospho-L-seryl-tRNA:Cys-tRNA synthase 2 (Methanoregula boonei (strain DSM 21154 / JCM 14090 / 6A8)).